We begin with the raw amino-acid sequence, 193 residues long: Serine recombinase gin (193 aa).

The 134-residue stretch at 1–134 (MLIGYVRVST…AGLAAARNKG (134 aa)) folds into the Resolvase/invertase-type recombinase catalytic domain. Residue serine 9 is the O-(5'-phospho-DNA)-serine intermediate of the active site. Positions 138 to 183 (GRPPKLTKAEWEQAGRLLAQGIPRKQVALIYDVALSTLYKKHPAKR) form a DNA-binding region, H-T-H motif.

The protein belongs to the site-specific recombinase resolvase family. As to quaternary structure, homodimer. During inversion, two dimers associate to form a homotetramer.

Its subcellular location is the host cytoplasm. Its function is as follows. Performs inversion of a viral 3 kp segment (G-segment) that encodes two alternate pairs of tail fiber proteins thereby modifying the host specificity of the virus. Binds as a dimer to the viral gix sites which are 34-bp palindromic sequences that flank the invertible G-segment. Catalyzes site-specific recombination in the presence of the host factor Fis. Gin dimers bound to each of the gix sites and host factor Fis bound to the enhancer come together to form the synaptic complex. Each Gin monomer introduces a nick and becomes covalently attached to the 5'-phosphate of the DNA, resulting in double-stranded staggered breaks at both recombination sites. A 180 degrees rotation of one of the two Gin dimers followed by religation of the DNA leads to the inversion of the G-segment (G+ or G- orientation). This Escherichia phage Mu (Bacteriophage Mu) protein is Serine recombinase gin (gin).